A 298-amino-acid polypeptide reads, in one-letter code: Ribosomal RNA small subunit methyltransferase H (298 aa).

S-adenosyl-L-methionine is bound by residues 46-48 (GGH), aspartate 65, phenylalanine 92, aspartate 108, and histidine 115.

It belongs to the methyltransferase superfamily. RsmH family.

The protein localises to the cytoplasm. It catalyses the reaction cytidine(1402) in 16S rRNA + S-adenosyl-L-methionine = N(4)-methylcytidine(1402) in 16S rRNA + S-adenosyl-L-homocysteine + H(+). Specifically methylates the N4 position of cytidine in position 1402 (C1402) of 16S rRNA. This Nostoc punctiforme (strain ATCC 29133 / PCC 73102) protein is Ribosomal RNA small subunit methyltransferase H.